A 116-amino-acid polypeptide reads, in one-letter code: Mercuric transport protein MerT (116 aa).

Transmembrane regions (helical) follow at residues Leu16–Phe36 and Val46–Trp66. Hg(2+) is bound by residues Cys24 and Cys25. Hg(2+)-binding residues include Cys76 and Cys82. Residues Ile94–Phe114 traverse the membrane as a helical segment.

Belongs to the MerT family.

The protein resides in the cell inner membrane. Its function is as follows. Involved in mercury resistance. Probably transfers a mercuric ion from the periplasmic Hg(2+)-binding protein MerP to the cytoplasmic mercuric reductase MerA. This is Mercuric transport protein MerT from Pseudomonas fluorescens.